The sequence spans 343 residues: Uroporphyrinogen decarboxylase (343 aa).

Residues Arg23–Arg27, Asp73, Tyr151, Ser206, and His322 each bind substrate.

It belongs to the uroporphyrinogen decarboxylase family. As to quaternary structure, homodimer.

It localises to the cytoplasm. It catalyses the reaction uroporphyrinogen III + 4 H(+) = coproporphyrinogen III + 4 CO2. The protein operates within porphyrin-containing compound metabolism; protoporphyrin-IX biosynthesis; coproporphyrinogen-III from 5-aminolevulinate: step 4/4. Functionally, catalyzes the decarboxylation of four acetate groups of uroporphyrinogen-III to yield coproporphyrinogen-III. The protein is Uroporphyrinogen decarboxylase of Granulibacter bethesdensis (strain ATCC BAA-1260 / CGDNIH1).